Here is a 219-residue protein sequence, read N- to C-terminus: Regulatory protein YeiL (219 aa).

A sensory domain region spans residues 19 to 97 (RLFHFLARDY…IEECWCLALP (79 aa)). [4Fe-4S] cluster contacts are provided by Cys-68, Cys-91, Cys-93, and Cys-116. The interval 111–131 (FLRKLCVTLSHKNYRNIVSLT) is dimer interface. Residues 136–199 (FPLVNRLAAF…KKGYLIKNRK (64 aa)) enclose the HTH crp-type domain. The H-T-H motif DNA-binding region spans 158–181 (KHTQAAEYLGVSYRHLLYVLAQFI).

As to quaternary structure, homodimer. The cofactor is [4Fe-4S] cluster.

It localises to the cytoplasm. In terms of biological role, transcription regulator involved in mid-term, stationary-phase viability under nitrogen starvation. Might control expression of the salvage pathways or in some other way repress the recycling of nucleobases to nucleic acids and enhance their use as general nitrogen sources during nitrogen-limited growth. The chain is Regulatory protein YeiL (yeiL) from Escherichia coli O157:H7.